We begin with the raw amino-acid sequence, 394 residues long: 1-deoxy-D-xylulose 5-phosphate reductoisomerase (394 aa).

NADPH-binding residues include threonine 10, glycine 11, serine 12, isoleucine 13, glycine 38, arginine 39, asparagine 40, and asparagine 123. Lysine 124 is a binding site for 1-deoxy-D-xylulose 5-phosphate. Residue glutamate 125 participates in NADPH binding. Aspartate 149 contributes to the Mn(2+) binding site. 1-deoxy-D-xylulose 5-phosphate-binding residues include serine 150, glutamate 151, serine 175, and histidine 198. Residue glutamate 151 participates in Mn(2+) binding. Glycine 204 provides a ligand contact to NADPH. 1-deoxy-D-xylulose 5-phosphate is bound by residues serine 211, asparagine 216, lysine 217, and glutamate 220. Glutamate 220 contacts Mn(2+).

The protein belongs to the DXR family. Mg(2+) serves as cofactor. The cofactor is Mn(2+).

The catalysed reaction is 2-C-methyl-D-erythritol 4-phosphate + NADP(+) = 1-deoxy-D-xylulose 5-phosphate + NADPH + H(+). It participates in isoprenoid biosynthesis; isopentenyl diphosphate biosynthesis via DXP pathway; isopentenyl diphosphate from 1-deoxy-D-xylulose 5-phosphate: step 1/6. In terms of biological role, catalyzes the NADPH-dependent rearrangement and reduction of 1-deoxy-D-xylulose-5-phosphate (DXP) to 2-C-methyl-D-erythritol 4-phosphate (MEP). The polypeptide is 1-deoxy-D-xylulose 5-phosphate reductoisomerase (Cereibacter sphaeroides (strain ATCC 17029 / ATH 2.4.9) (Rhodobacter sphaeroides)).